The following is a 351-amino-acid chain: Autoinducer 2 import system permease protein LsrC (351 aa).

9 consecutive transmembrane segments (helical) span residues Leu-14–Leu-34, Met-39–Leu-59, Ile-70–Ala-90, Leu-93–Leu-113, Ile-115–Leu-135, Ile-155–Trp-175, Met-213–Pro-233, Gly-252–Leu-272, and Leu-284–Asp-304.

It belongs to the binding-protein-dependent transport system permease family. AraH/RbsC subfamily. The complex is composed of two ATP-binding proteins (LsrA), two transmembrane proteins (LsrC and LsrD) and a solute-binding protein (LsrB).

The protein localises to the cell inner membrane. Functionally, part of the ABC transporter complex LsrABCD involved in autoinducer 2 (AI-2) import. Probably responsible for the translocation of the substrate across the membrane. In Yersinia pseudotuberculosis serotype O:1b (strain IP 31758), this protein is Autoinducer 2 import system permease protein LsrC (lsrC).